Consider the following 238-residue polypeptide: MEITEFRQRLEERGFSLSQAQLDQFEHYYHTLVEWNEKMNLTAITDKEGVYLKHFYDSLTAAFYVDFTKVATVVDVGAGAGFPSIPLKIVFPELRVTIVDSLKKRIGFLEHLSETLGLKGTAFYHDRAETFAQKKEHREQYDLVLARAVARLPVLSELCLPLAKVEGTFVAMKGAGANEELTAAQGALKKLGGSVIQNEQFTLPIEESERHVIIIRKERSTPKKYPRKPGTPNKQPLS.

Residues Gly77, Phe82, 128–129 (AE), and Arg147 contribute to the S-adenosyl-L-methionine site. The tract at residues 216–238 (RKERSTPKKYPRKPGTPNKQPLS) is disordered.

This sequence belongs to the methyltransferase superfamily. RNA methyltransferase RsmG family.

It is found in the cytoplasm. Functionally, specifically methylates the N7 position of guanine in position 535 of 16S rRNA. The polypeptide is Ribosomal RNA small subunit methyltransferase G (Halalkalibacterium halodurans (strain ATCC BAA-125 / DSM 18197 / FERM 7344 / JCM 9153 / C-125) (Bacillus halodurans)).